The primary structure comprises 464 residues: Chromosomal replication initiator protein DnaA (464 aa).

The tract at residues 1–82 is domain I, interacts with DnaA modulators; it reads MSLSLWQQCL…LLRFEVGSKP (82 aa). The tract at residues 82–127 is domain II; that stretch reads PPQMAVLQPASQHASEAPSQAAVARPRPSRPSWDNAPVQPELSYRS. The interval 91–118 is disordered; it reads ASQHASEAPSQAAVARPRPSRPSWDNAP. A domain III, AAA+ region region spans residues 128–344; sequence NVNPKHNFDN…GALNRVIANA (217 aa). Residues glycine 172, glycine 174, lysine 175, and threonine 176 each contribute to the ATP site. Positions 345 to 464 are domain IV, binds dsDNA; it reads NFTGRAITID…FSNLIRTLSS (120 aa).

It belongs to the DnaA family. Oligomerizes as a right-handed, spiral filament on DNA at oriC.

It is found in the cytoplasm. Functionally, plays an essential role in the initiation and regulation of chromosomal replication. ATP-DnaA binds to the origin of replication (oriC) to initiate formation of the DNA replication initiation complex once per cell cycle. Binds the DnaA box (a 9 base pair repeat at the origin) and separates the double-stranded (ds)DNA. Forms a right-handed helical filament on oriC DNA; dsDNA binds to the exterior of the filament while single-stranded (ss)DNA is stabiized in the filament's interior. The ATP-DnaA-oriC complex binds and stabilizes one strand of the AT-rich DNA unwinding element (DUE), permitting loading of DNA polymerase. After initiation quickly degrades to an ADP-DnaA complex that is not apt for DNA replication. Binds acidic phospholipids. The chain is Chromosomal replication initiator protein DnaA from Sodalis glossinidius (strain morsitans).